The chain runs to 1058 residues: MDLGPLNICEEMTILHGGFLLAEQLFHPKALAELTKSDWERVGRPIVEALREISSAAAHSQPFAWKKKALIIIWAKVLQPHPVTPSDTETRWQEDLFFSVGNMIPTINHTILFELLKSLEASGLFIQLLMALPTTICHAELERFLEHVTVDTSAEDVAFFLDVWWEVMKHKGHPQDPLLSQFSAMAHKYLPALDEFPHPPKRLRSDPDACPTMPLLAMLLRGLTQIQSRILGPGRKCCALANLADMLTVFALTEDDPQEVSATVYLDKLATVISVWNSDTQNPYHQQALAEKVKEAERDVSLTSLAKLPSETIFVGCEFLHHLLREWGEELQAVLRSSQGTSYDSYRLCDSLTSFSQNATLYLNRTSLSKEDRQVVSELAECVRDFLRKTSTVLKNRALEDITASIAMAVIQQKMDRHMEVCYIFASEKKWAFSDEWVACLGSNRALFRQPDLVLRLLETVIDVSTADRAIPESQIRQVIHLILECYADLSLPGKNKVLAGILRSWGRKGLSEKLLAYVEGFQEDLNTTFNQLTQSASEQGLAKAVASVARLVIVHPEVTVKKMCSLAVVNLGTHKFLAQILTAFPALRFVEEQGPNSSATFMVSCLKETVWMKFSTPKEEKQFLELLNCLMSPVKPQGIPVAALLEPDEVLKEFVLPFLRLDVEEVDLSLRIFIQTLEANACREEYWLQTCSPFPLLFSLCQLLDRFSKYWQLPKEKRCLSLDRKDLAIHILELLCEIVSANAETFSPDVWIKSLSWLHRKLEQLDWTVGLRLKSFFEGHFKCEVPATLFEICKLSEDEWTSQAHPGYGAGTGLLAWMECCCVSSGISERMLSLLVVDVGNPEEVRLFSKGFLVALVQVMPWCSPQEWQRLHQLTRRLLEKQLLHVPYSLEYIQFVPLLNLKPFAQELQLSVLFLRTFQFLCSHSCRDWLPLEGWNHVVKLLCGSLTRLLDSVRAIQAAGPWVQGPEQDLTQEALFVYTQVFCHALHIMAMLHPEVCEPLYVLALETLTCYETLSKTNPSVSSLLQRAHEQRFLKSIAEGIGPEERRQTLLQKMSSF.

Methionine 1 carries the post-translational modification N-acetylmethionine. At threonine 84 the chain carries Phosphothreonine. A phosphoserine mark is found at serine 86 and serine 205. The leucine-zipper stretch occupies residues 714–735 (LPKEKRCLSLDRKDLAIHILEL).

As to quaternary structure, part of the core SMN complex that contains SMN1, GEMIN2/SIP1, DDX20/GEMIN3, GEMIN4, GEMIN5, GEMIN6, GEMIN7, GEMIN8 and STRAP/UNRIP. Part of the SMN-Sm complex that contains SMN1, GEMIN2/SIP1, DDX20/GEMIN3, GEMIN4, GEMIN5, GEMIN6, GEMIN7, GEMIN8, STRAP/UNRIP and the Sm proteins SNRPB, SNRPD1, SNRPD2, SNRPD3, SNRPE, SNRPF and SNRPG. Interacts with GEMIN3; the interaction is direct. Interacts with GEMIN5. Interacts with GEMIN8; the interaction is direct. Interacts with several snRNP SM core proteins, including SNRPB, SNRPD1, SNRPD2, SNRPD3 and SNRPE. Interacts with PPP4R2.

Its subcellular location is the cytoplasm. It is found in the nucleus. The protein resides in the nucleolus. It localises to the gem. Its function is as follows. The SMN complex catalyzes the assembly of small nuclear ribonucleoproteins (snRNPs), the building blocks of the spliceosome, and thereby plays an important role in the splicing of cellular pre-mRNAs. Most spliceosomal snRNPs contain a common set of Sm proteins SNRPB, SNRPD1, SNRPD2, SNRPD3, SNRPE, SNRPF and SNRPG that assemble in a heptameric protein ring on the Sm site of the small nuclear RNA to form the core snRNP (Sm core). In the cytosol, the Sm proteins SNRPD1, SNRPD2, SNRPE, SNRPF and SNRPG are trapped in an inactive 6S pICln-Sm complex by the chaperone CLNS1A that controls the assembly of the core snRNP. To assemble core snRNPs, the SMN complex accepts the trapped 5Sm proteins from CLNS1A forming an intermediate. Binding of snRNA inside 5Sm triggers eviction of the SMN complex, thereby allowing binding of SNRPD3 and SNRPB to complete assembly of the core snRNP. The chain is Gem-associated protein 4 (GEMIN4) from Homo sapiens (Human).